Reading from the N-terminus, the 141-residue chain is Hemoglobin subunit alpha-A (141 aa).

A Globin domain is found at 1–141 (VLSPADKSNV…VGTVLTAKYR (141 aa)). His58 contacts O2. His87 is a heme b binding site.

It belongs to the globin family. In terms of assembly, heterotetramer of two alpha chains and two beta chains. Red blood cells.

In terms of biological role, involved in oxygen transport from the lung to the various peripheral tissues. The sequence is that of Hemoglobin subunit alpha-A (HBAA) from Passer montanus (Eurasian tree sparrow).